Reading from the N-terminus, the 85-residue chain is Large ribosomal subunit protein bL27 (85 aa).

Residues M1–G22 form a disordered region.

The protein belongs to the bacterial ribosomal protein bL27 family.

The protein is Large ribosomal subunit protein bL27 of Psychromonas ingrahamii (strain DSM 17664 / CCUG 51855 / 37).